Consider the following 774-residue polypeptide: Neprilysin-2 (774 aa).

Topologically, residues 1–20 are cytoplasmic; sequence MQTVIQNPNWWRRRNKLEKS. Residues 21-41 form a helical; Signal-anchor for type II membrane protein membrane-spanning segment; it reads LLVSLGIMFVVLATGFGLWIG. Topologically, residues 42–774 are extracellular; sequence KVLRTSPPSN…MNPVQKCEVW (733 aa). The disordered stretch occupies residues 50 to 79; that stretch reads SNPQATALHGDSTTINQVPTGTASKGKSGD. The span at 60 to 74 shows a compositional bias: polar residues; the sequence is DSTTINQVPTGTASK. The region spanning 83–774 is the Peptidase M13 domain; that stretch reads VCLTQECIHT…MNPVQKCEVW (692 aa). 5 cysteine pairs are disulfide-bonded: C84-C89, C107-C759, C115-C719, C171-C424, and C646-C771. N-linked (GlcNAc...) asparagine glycosylation is found at N173, N239, N264, N305, N315, N358, and N554. A Zn(2+)-binding site is contributed by H609. E610 is an active-site residue. H613 contacts Zn(2+). A glycan (N-linked (GlcNAc...) asparagine) is linked at N653. Position 671 (E671) interacts with Zn(2+). D675 functions as the Proton donor in the catalytic mechanism.

The protein belongs to the peptidase M13 family. Zn(2+) serves as cofactor. N-glycosylated. Post-translationally, the soluble form is probably produced by proteolytic cleavage. Detected in the stellate cells in the main segment and the bar-shaped cells in the initial segment of male and female Malpighian tubules (at protein level). Expressed in the spermatheca (at protein level). Expressed in the somatic cyst cells of the testes, with increased expression at the tail end of elongating cysts. Expressed in the ovaries with strong expression in the posterior polar cells and in border cells of stage 8, 9, and 10 follicles. In adults and third-instar larvae, expressed in the brain, ventral ganglion, and stellate cells. Also expressed in the foregut and the imaginal disks (eye, antennal and leg) of third-instar larvae. In stage 17 embryos, expressed in the tracheal system, foregut, hindgut and epidermis. Also expressed in the stellate cell progenitors of the caudal visceral mesoderm in embryos.

It is found in the cell membrane. It localises to the secreted. It carries out the reaction Preferential cleavage of polypeptides between hydrophobic residues, particularly with Phe or Tyr at P1'.. Metalloendoprotease which cleaves peptides such as tachykinin peptide TK-2 at the amino side of hydrophobic residues. Functions in female fertility, embryogenesis and memory formation. Required in females for normal patterns of egg laying, probably due to its function in sperm retention and preventing sperm displacement by rival ejaculates. Also required for normal patterns of hatching due to its important role in early embryonic development. Required in the dorsal paired medial neurons for the proper formation of middle-term memory. Also required in the mushroom body neurons where it functions redundantly with neprilysins Nep3 and Nep4 in normal long-term memory formation. In Drosophila melanogaster (Fruit fly), this protein is Neprilysin-2.